Reading from the N-terminus, the 349-residue chain is ATPase GET3 (349 aa).

Lys-26–Thr-33 lines the ATP pocket. Residue Asp-57 is part of the active site. ATP contacts are provided by Glu-240 and Asn-267. Positions 280 and 283 each coordinate Zn(2+).

The protein belongs to the arsA ATPase family. In terms of assembly, homodimer. Component of the Golgi to ER traffic (GET) complex, which is composed of GET1, GET2 and GET3. Within the complex, GET1 and GET2 form a heterotetramer which is stabilized by phosphatidylinositol binding and which binds to the GET3 homodimer. Interacts with the chloride channel protein GEF1.

It localises to the cytoplasm. Its subcellular location is the endoplasmic reticulum. The protein resides in the golgi apparatus. Functionally, ATPase required for the post-translational delivery of tail-anchored (TA) proteins to the endoplasmic reticulum. Recognizes and selectively binds the transmembrane domain of TA proteins in the cytosol. This complex then targets to the endoplasmic reticulum by membrane-bound receptors GET1 and GET2, where the tail-anchored protein is released for insertion. This process is regulated by ATP binding and hydrolysis. ATP binding drives the homodimer towards the closed dimer state, facilitating recognition of newly synthesized TA membrane proteins. ATP hydrolysis is required for insertion. Subsequently, the homodimer reverts towards the open dimer state, lowering its affinity for the GET1-GET2 receptor, and returning it to the cytosol to initiate a new round of targeting. Cooperates with the HDEL receptor ERD2 to mediate the ATP-dependent retrieval of resident ER proteins that contain a C-terminal H-D-E-L retention signal from the Golgi to the ER. Involved in low-level resistance to the oxyanions arsenite and arsenate, and in heat tolerance. The sequence is that of ATPase GET3 from Kluyveromyces lactis (strain ATCC 8585 / CBS 2359 / DSM 70799 / NBRC 1267 / NRRL Y-1140 / WM37) (Yeast).